The sequence spans 201 residues: Large ribosomal subunit protein bL25 (201 aa).

The segment at 179-201 (VSITAPRVEAEKTEEEEPESTEE) is disordered. Residues 190–201 (KTEEEEPESTEE) are compositionally biased toward acidic residues.

Belongs to the bacterial ribosomal protein bL25 family. CTC subfamily. Part of the 50S ribosomal subunit; part of the 5S rRNA/L5/L18/L25 subcomplex. Contacts the 5S rRNA. Binds to the 5S rRNA independently of L5 and L18.

Its function is as follows. This is one of the proteins that binds to the 5S RNA in the ribosome where it forms part of the central protuberance. The polypeptide is Large ribosomal subunit protein bL25 (Prosthecochloris aestuarii (strain DSM 271 / SK 413)).